The following is a 166-amino-acid chain: MKRTVFPLAVAAALTLTACETILNNLPGVYSIDIEQGNMIDQAMVDQLRPNMSKRQVLYIMGSPMLTDTFHERRWDYLYSDQPGGEARVQKRISLFFDGDNLIGVQGDFRPSKLPVIKESTETTVDVPKRNLDKTMWEKITGLFSNDDSGEMPVKPESKPSDLLNE.

The first 18 residues, 1–18 (MKRTVFPLAVAAALTLTA), serve as a signal peptide directing secretion. A lipid anchor (N-palmitoyl cysteine) is attached at Cys19. Cys19 carries S-diacylglycerol cysteine lipidation. A disordered region spans residues 143–166 (LFSNDDSGEMPVKPESKPSDLLNE).

This sequence belongs to the BamE family. In terms of assembly, part of the Bam complex.

It localises to the cell outer membrane. In terms of biological role, part of the outer membrane protein assembly complex, which is involved in assembly and insertion of beta-barrel proteins into the outer membrane. The sequence is that of Outer membrane protein assembly factor BamE from Methylomonas methanica (strain DSM 25384 / MC09).